The following is a 179-amino-acid chain: ATP-dependent protease subunit HslV (179 aa).

Residue Thr-7 is part of the active site. Residues Gly-162, Cys-165, and Thr-168 each coordinate Na(+).

The protein belongs to the peptidase T1B family. HslV subfamily. A double ring-shaped homohexamer of HslV is capped on each side by a ring-shaped HslU homohexamer. The assembly of the HslU/HslV complex is dependent on binding of ATP.

It is found in the cytoplasm. The enzyme catalyses ATP-dependent cleavage of peptide bonds with broad specificity.. With respect to regulation, allosterically activated by HslU binding. Protease subunit of a proteasome-like degradation complex believed to be a general protein degrading machinery. The chain is ATP-dependent protease subunit HslV from Bordetella pertussis (strain Tohama I / ATCC BAA-589 / NCTC 13251).